A 469-amino-acid chain; its full sequence is Uronate isomerase (469 aa).

The protein belongs to the metallo-dependent hydrolases superfamily. Uronate isomerase family.

The catalysed reaction is D-glucuronate = D-fructuronate. It carries out the reaction aldehydo-D-galacturonate = keto-D-tagaturonate. Its pathway is carbohydrate metabolism; pentose and glucuronate interconversion. The polypeptide is Uronate isomerase (Edwardsiella ictaluri (strain 93-146)).